Consider the following 903-residue polypeptide: MLVKLLTKVFGSRNDRTLRRMRKAVELINQMEPDMEKLSDDELKAKTNEFRARLEKGEVLENLLPEAFAVVRESSKRVFGMRHFDVQLLGGMVLNDRCIAEMRTGEGKTLTATLPAYLNALSGRGVHVVTVNDYLAQRDAENNRPLFEFLGLSIGINLPGMPAPAKREAYAADITYGTNNEYGFDYLRDNMAFSPEERVQRKLHYALVDEVDSILIDEARTPLIISGPAEDSSEMYIRVNKLIPQLIRQEKEDSDSFQGEGHFSVDEKARQVHLTERGLILIEEMLMEAGIMDEGESLYSPTNIMLMHHVTAALRAHVLFTRDVDYIVKDGEVIIVDEHTGRTMQGRRWSDGLHQAVEAKEGVEIQNENQTLASITFQNYFRLYEKLAGMTGTADTEAFEFSSIYKLDTIVVPTNRPMIRKDMPDLVYMTELEKIGAIIEDIRERTVNGQPVLVGTISIEKSEVVSRELTKAGIEHKVLNAKFHAMEADIVAQAGQSSAVTIATNMAGRGTDIVLGGSWQAEIEQLEDPTEEQIAEIKAAWKIRHDAVLAAGGLHIIGTERHESRRIDNQLRGRSGRQGDAGSSRFYLSMEDALMRIFASDRVSSMMRKLGMKEGEAIEHPWVTKAIANAQRKVESRNFDIRKQLLEYDDVANDQRRAIYSQRNELLDVSDVSETITSIREDVFKTTIDGYIQPESLEEEWDIEGLTERLKNDFDLDMPIAEWLDKEPQLHEETLRERILEKAKEEYQRKEEVVGVEMMRNFEKGVMLQTLDSLWKEHLAAMDYLRQGIHLRGYAQKDPKQEYKRESFNMFATMLESLKHEVISVLSKVQVRMPEEVEALELQRREEAERLAKQQQLSHYEENALVTEDPNAPATAERKVGRNDPCPCGSGKKYKQCHGRLQS.

ATP is bound by residues glutamine 87, 105-109 (GEGKT), and aspartate 512. Residues 853–903 (KQQQLSHYEENALVTEDPNAPATAERKVGRNDPCPCGSGKKYKQCHGRLQS) form a disordered region. Zn(2+) is bound by residues cysteine 886, cysteine 888, cysteine 897, and histidine 898. Over residues 892-903 (KKYKQCHGRLQS) the composition is skewed to basic residues.

It belongs to the SecA family. In terms of assembly, monomer and homodimer. Part of the essential Sec protein translocation apparatus which comprises SecA, SecYEG and auxiliary proteins SecDF-YajC and YidC. Zn(2+) serves as cofactor.

The protein localises to the cell inner membrane. It localises to the cytoplasm. The catalysed reaction is ATP + H2O + cellular proteinSide 1 = ADP + phosphate + cellular proteinSide 2.. Functionally, part of the Sec protein translocase complex. Interacts with the SecYEG preprotein conducting channel. Has a central role in coupling the hydrolysis of ATP to the transfer of proteins into and across the cell membrane, serving both as a receptor for the preprotein-SecB complex and as an ATP-driven molecular motor driving the stepwise translocation of polypeptide chains across the membrane. In Serratia proteamaculans (strain 568), this protein is Protein translocase subunit SecA.